We begin with the raw amino-acid sequence, 408 residues long: Tryptophan synthase beta chain (408 aa).

An N6-(pyridoxal phosphate)lysine modification is found at Lys97.

The protein belongs to the TrpB family. As to quaternary structure, tetramer of two alpha and two beta chains. Pyridoxal 5'-phosphate serves as cofactor.

It catalyses the reaction (1S,2R)-1-C-(indol-3-yl)glycerol 3-phosphate + L-serine = D-glyceraldehyde 3-phosphate + L-tryptophan + H2O. It participates in amino-acid biosynthesis; L-tryptophan biosynthesis; L-tryptophan from chorismate: step 5/5. The beta subunit is responsible for the synthesis of L-tryptophan from indole and L-serine. The chain is Tryptophan synthase beta chain (trpB) from Pseudomonas syringae pv. syringae.